The following is a 217-amino-acid chain: Nucleoredoxin-like protein 1 (217 aa).

One can recognise a Thioredoxin domain in the interval 1–164 (MASLFSGRIL…AAELLDRSFL (164 aa)). Residues 188-204 (VDRDVGRERGRNGRDSG) show a composition bias toward basic and acidic residues. The segment at 188-217 (VDRDVGRERGRNGRDSGDPQGDAGTRAELW) is disordered.

Belongs to the nucleoredoxin family. In terms of assembly, interacts with isoform 1 of BSG. Expressed in the retina (at protein level). Expressed predominantly by photoreceptors in both the inner and outer nuclear layer (at protein level). Not expressed in the testis, spleen, intestine, lung, cerebellum, or kidney.

It localises to the cell projection. The protein localises to the cilium. Its subcellular location is the photoreceptor outer segment. Functionally, plays an important role in retinal cone photoreceptor survival. In association with glucose transporter SLC16A1/GLUT1 and BSG, promotes retinal cone survival by enhancing aerobic glycolysis and accelerating the entry of glucose into photoreceptors. May play a role in cone cell viability, slowing down cone degeneration, does not seem to play a role in degenerating rods. This is Nucleoredoxin-like protein 1 (Nxnl1) from Mus musculus (Mouse).